A 591-amino-acid chain; its full sequence is Formate--tetrahydrofolate ligase (591 aa).

ATP is bound at residue 74 to 81; that stretch reads TPLGEGKS.

Belongs to the formate--tetrahydrofolate ligase family.

It catalyses the reaction (6S)-5,6,7,8-tetrahydrofolate + formate + ATP = (6R)-10-formyltetrahydrofolate + ADP + phosphate. It participates in one-carbon metabolism; tetrahydrofolate interconversion. The chain is Formate--tetrahydrofolate ligase from Lawsonia intracellularis (strain PHE/MN1-00).